A 261-amino-acid polypeptide reads, in one-letter code: SURF1-like protein (261 aa).

2 consecutive transmembrane segments (helical) span residues 17–37 (LYWALLSVPVVTFGLGTWQIF) and 223–243 (LSYIITWYSISAITLAMWVFL).

This sequence belongs to the SURF1 family.

It is found in the mitochondrion inner membrane. In terms of biological role, probably involved in the biogenesis of the COX complex. This chain is SURF1-like protein, found in Monosiga brevicollis (Choanoflagellate).